The following is a 403-amino-acid chain: Metacaspase-1A (403 aa).

A disordered region spans residues 1-93 (MQHHHHSSYG…PPTDPVAFGH (93 aa)). The segment covering 18 to 31 (GQAYRQQQPYYGQP) has biased composition (low complexity). Positions 32–55 (SPQPYAQPPPPNYQRPSGYGPPPS) are enriched in pro residues. Residues His-194 and Cys-250 contribute to the active site.

Belongs to the peptidase C14B family.

Its function is as follows. Involved in cell death (apoptosis). This chain is Metacaspase-1A (casA), found in Aspergillus terreus (strain NIH 2624 / FGSC A1156).